A 326-amino-acid polypeptide reads, in one-letter code: Tagatose 1,6-diphosphate aldolase (326 aa).

It belongs to the aldolase LacD family.

It carries out the reaction D-tagatofuranose 1,6-bisphosphate = D-glyceraldehyde 3-phosphate + dihydroxyacetone phosphate. Its pathway is carbohydrate metabolism; D-tagatose 6-phosphate degradation; D-glyceraldehyde 3-phosphate and glycerone phosphate from D-tagatose 6-phosphate: step 2/2. This is Tagatose 1,6-diphosphate aldolase from Staphylococcus aureus (strain MSSA476).